Reading from the N-terminus, the 258-residue chain is UDP-N-acetylenolpyruvoylglucosamine reductase (258 aa).

Arginine 142 is an active-site residue. Catalysis depends on serine 184, which acts as the Proton donor. Glutamate 254 is an active-site residue.

This sequence belongs to the MurB family. It depends on FAD as a cofactor.

The protein localises to the cytoplasm. The enzyme catalyses UDP-N-acetyl-alpha-D-muramate + NADP(+) = UDP-N-acetyl-3-O-(1-carboxyvinyl)-alpha-D-glucosamine + NADPH + H(+). It functions in the pathway cell wall biogenesis; peptidoglycan biosynthesis. Functionally, cell wall formation. The protein is UDP-N-acetylenolpyruvoylglucosamine reductase of Campylobacter jejuni subsp. jejuni serotype O:2 (strain ATCC 700819 / NCTC 11168).